Here is a 247-residue protein sequence, read N- to C-terminus: Terpene cyclase ausL (247 aa).

The next 6 membrane-spanning stretches (helical) occupy residues 49-69 (AIAV…AWIY), 75-95 (HWQG…AATL), 114-134 (LVLL…CLAL), 138-158 (GALG…SGAV), 171-191 (SLVI…KLCI), and 206-226 (PMCW…PVLY).

It belongs to the paxB family.

The protein resides in the membrane. The protein operates within secondary metabolite biosynthesis; terpenoid biosynthesis. In terms of biological role, terpene cyclase; part of the gene cluster that mediates the biosynthesis of calidodehydroaustin, a fungal meroterpenoid. The first step of the pathway is the synthesis of 3,5-dimethylorsellinic acid by the polyketide synthase ausA. 3,5-dimethylorsellinic acid is then prenylated by the polyprenyl transferase ausN. Further epoxidation by the FAD-dependent monooxygenase ausM and cyclization by the probable terpene cyclase ausL lead to the formation of protoaustinoid A. Protoaustinoid A is then oxidized to spiro-lactone preaustinoid A3 by the combined action of the FAD-binding monooxygenases ausB and ausC, and the dioxygenase ausE. Acid-catalyzed keto-rearrangement and ring contraction of the tetraketide portion of preaustinoid A3 by ausJ lead to the formation of preaustinoid A4. The aldo-keto reductase ausK, with the help of ausH, is involved in the next step by transforming preaustinoid A4 into isoaustinone which is in turn hydroxylated by the P450 monooxygenase ausI to form austinolide. The cytochrome P450 monooxygenase ausG modifies austinolide to austinol. Austinol is further acetylated to austin by the O-acetyltransferase ausP, which spontaneously changes to dehydroaustin. The cytochrome P450 monooxygenase ausR then converts dehydroaustin is into 7-dehydrodehydroaustin. The hydroxylation catalyzed by ausR permits the O-acetyltransferase ausQ to add an additional acetyl group to the molecule, leading to the formation of acetoxydehydroaustin. The short chain dehydrogenase ausT catalyzes the reduction of the double bond present between carbon atoms 1 and 2 to convert 7-dehydrodehydroaustin into 1,2-dihydro-7-hydroxydehydroaustin. AusQ catalyzes not only an acetylation reaction but also the addition of the PKS ausV diketide product to 1,2-dihydro-7-hydroxydehydroaustin, forming precalidodehydroaustin. Finally, the iron/alpha-ketoglutarate-dependent dioxygenase converts precalidodehydroaustin into calidodehydroaustin. This is Terpene cyclase ausL from Aspergillus calidoustus.